The following is a 202-amino-acid chain: Rho GDP-dissociation inhibitor (202 aa).

The residue at position 2 (Ala2) is an N-acetylalanine. A Phosphothreonine modification is found at Thr27. A Phosphoserine modification is found at Ser40.

This sequence belongs to the Rho GDI family.

It is found in the cytoplasm. In terms of biological role, regulates the GDP/GTP exchange reaction of the Rho proteins by inhibiting the dissociation of GDP from them, and the subsequent binding of GTP to them. The sequence is that of Rho GDP-dissociation inhibitor (RDI1) from Saccharomyces cerevisiae (strain ATCC 204508 / S288c) (Baker's yeast).